Here is a 95-residue protein sequence, read N- to C-terminus: Cobalt transport protein CbiN (95 aa).

The next 2 membrane-spanning stretches (helical) occupy residues 5-25 and 67-87; these read HIILLAIVAIIIALPLIIYAG and LLFALQAAIGAIIIGYYIGYY.

This sequence belongs to the CbiN family. As to quaternary structure, forms an energy-coupling factor (ECF) transporter complex composed of an ATP-binding protein (A component, CbiO), a transmembrane protein (T component, CbiQ) and 2 possible substrate-capture proteins (S components, CbiM and CbiN) of unknown stoichimetry.

It is found in the cell membrane. The protein operates within cofactor biosynthesis; adenosylcobalamin biosynthesis. Part of the energy-coupling factor (ECF) transporter complex CbiMNOQ involved in cobalt import. This is Cobalt transport protein CbiN from Methanocaldococcus jannaschii (strain ATCC 43067 / DSM 2661 / JAL-1 / JCM 10045 / NBRC 100440) (Methanococcus jannaschii).